Consider the following 584-residue polypeptide: High-affinity choline transporter 1 (584 aa).

At 1-6 (MTVHID) the chain is on the extracellular side. The chain crosses the membrane as a helical span at residues 7–27 (GIVAIVLFYLLILFVGLWAAW). Over 28-50 (KSKNTSMEGAMDRSEAIMIGGRD) the chain is Cytoplasmic. A helical membrane pass occupies residues 51 to 71 (IGLLVGGFTMTATWVGGGYIN). The Extracellular segment spans residues 72–83 (GTAEAVYVPGYG). Residues 84 to 104 (LAWAQAPFGYALSLVIGGLFF) form a helical membrane-spanning segment. Residues 105–127 (AKPMRSRGYVTMLDPFQQMYGKR) lie on the Cytoplasmic side of the membrane. A helical membrane pass occupies residues 128 to 148 (MGGLLFIPALLGEIFWSAAIL). The Extracellular segment spans residues 149-166 (SALGATLSVIVDININVS). Residues 167 to 187 (VVVSAVIAVLYTLVGGLYSVA) traverse the membrane as a helical segment. At 188 to 193 (YTDVVQ) the chain is on the cytoplasmic side. The chain crosses the membrane as a helical span at residues 194–214 (LFCIFLGLWISIPFALLNPAV). Topologically, residues 215–239 (TDIIVTANQEVYQEPWVGNIQSKDS) are extracellular. The helical transmembrane segment at 240 to 260 (LIWIDNFLLLMLGGIPWQVYF) threads the bilayer. At 261-276 (QRVLSASSATYAQVLS) the chain is on the cytoplasmic side. Residues 277–297 (FLAAFGCVLMAIPSVLIGAIG) traverse the membrane as a helical segment. Topologically, residues 298–319 (TSTDWNQTSYGLPGPIGKNETD) are extracellular. A glycan (N-linked (GlcNAc...) asparagine) is linked at N303. Residues 320–340 (MILPIVLQHLCPPYISFFGLG) traverse the membrane as a helical segment. Topologically, residues 341–378 (AVSAAVMSSADSSILSASSMFARNIYHLAFRQEASDKE) are cytoplasmic. The helical transmembrane segment at 379–399 (IVWVMRITIFLFGGAATSMAL) threads the bilayer. The Extracellular portion of the chain corresponds to 400-408 (LAQSIYGLW). The chain crosses the membrane as a helical span at residues 409-429 (YLSSDLVYVIIFPQLISVLFV). The Cytoplasmic portion of the chain corresponds to 430 to 437 (KGTNTYGS). The helical transmembrane segment at 438–458 (IAGYIIGFLLRISGGEPYLHM) threads the bilayer. At 459–487 (QPFIYYPGCYLDHSFGDDPVYVQRFPFKT) the chain is on the extracellular side. The chain crosses the membrane as a helical span at residues 488-508 (MAMLFSFLGNTGVSYLVKYLF). At 509–584 (VSGILPPKLD…NPELSKSGND (76 aa)) the chain is on the cytoplasmic side.

This sequence belongs to the sodium:solute symporter (SSF) (TC 2.A.21) family. Post-translationally, phosphorylated. Specific for cholinergic neurons.

The protein resides in the membrane. Imports choline from the extracellular space to the neuron with high affinity. Rate-limiting step in acetylcholine synthesis. Sodium ion and chloride ion dependent. The protein is High-affinity choline transporter 1 (CHT1) of Torpedo marmorata (Marbled electric ray).